The chain runs to 457 residues: MKTNKNKTNIKMIGFYHFFYFVKPYYLLINENVIIFKAKGDFMIQKPRGTQDLFLNNSKEWNAVEEKFRKVLNLFNYGEIITPMFESKELFVRGVGDSSDIVSKEMYEFTDRKGREYVLRPEGTAPTVRALIENKLYIQENLPYKTFYIGPIFRYERPQAGRYRQFNQLGVETFGIDSISHDVELISLGQSFLKELKINKDVIVEMNYLISGNERKEYELELKKYLNLFDDLCSDCEIRINKNVLRVLDCKIDGNKFAEAPKMTLFASQENKERLNKTFDQLKQLGIEAKINFNLVRGLDYYTGLVFEFKNIKTDQAIIAGGSYNNLVEELGGPNLPASGFAIGIERIMMILSDQEIKVADEDELDLFIIPLSDDAQFLTNKLLLEARTANLKVDTNWNIKNLKAGFKSAERLKSKNIVIIGENSINSDIYAIKDQKSGETKELKFKDIVKYLKGEK.

The protein belongs to the class-II aminoacyl-tRNA synthetase family. Homodimer.

The protein localises to the cytoplasm. The enzyme catalyses tRNA(His) + L-histidine + ATP = L-histidyl-tRNA(His) + AMP + diphosphate + H(+). The polypeptide is Histidine--tRNA ligase (Mesoplasma florum (strain ATCC 33453 / NBRC 100688 / NCTC 11704 / L1) (Acholeplasma florum)).